A 581-amino-acid chain; its full sequence is DNA polymerase alpha subunit B (581 aa).

It belongs to the DNA polymerase alpha subunit B family. As to quaternary structure, DNA polymerase alpha:primase is a four subunit enzyme complex, which is assembled throughout the cell cycle, and consists of the two DNA polymerase subunits A and B, and the DNA primase large and small subunits. Subunit B binds to subunit A.

Its subcellular location is the nucleus. Functionally, may play an essential role at the early stage of chromosomal DNA replication by coupling the polymerase alpha/primase complex to the cellular replication machinery. Required for the distribution of pie-1 in cell divsion. The polypeptide is DNA polymerase alpha subunit B (div-1) (Caenorhabditis elegans).